A 145-amino-acid polypeptide reads, in one-letter code: Ribonuclease H (145 aa).

The region spanning 1-142 is the RNase H type-1 domain; sequence MDTPVYLYTD…ADDLANRGAA (142 aa). Asp10, Glu48, Asp70, and Asp134 together coordinate Mg(2+).

Belongs to the RNase H family. In terms of assembly, monomer. Mg(2+) is required as a cofactor.

It is found in the cytoplasm. It carries out the reaction Endonucleolytic cleavage to 5'-phosphomonoester.. In terms of biological role, endonuclease that specifically degrades the RNA of RNA-DNA hybrids. The protein is Ribonuclease H of Neisseria meningitidis serogroup C / serotype 2a (strain ATCC 700532 / DSM 15464 / FAM18).